A 405-amino-acid chain; its full sequence is Deoxyguanosinetriphosphate triphosphohydrolase-like protein (405 aa).

In terms of domain architecture, HD spans 75–219; sequence RLTHTIEVAQ…AAIADDIAYN (145 aa).

The protein belongs to the dGTPase family. Type 2 subfamily.

In Rhizobium etli (strain ATCC 51251 / DSM 11541 / JCM 21823 / NBRC 15573 / CFN 42), this protein is Deoxyguanosinetriphosphate triphosphohydrolase-like protein.